The primary structure comprises 276 residues: Large ribosomal subunit protein uL2 (276 aa).

Disordered regions lie at residues 37 to 59 and 225 to 276; these read QFQKSGRNNNGHITTRHKGGGHK and VMNP…RHKR. The segment covering 39 to 49 has biased composition (polar residues); it reads QKSGRNNNGHI. The segment covering 50-59 has biased composition (basic residues); the sequence is TTRHKGGGHK.

The protein belongs to the universal ribosomal protein uL2 family. In terms of assembly, part of the 50S ribosomal subunit. Forms a bridge to the 30S subunit in the 70S ribosome.

Its function is as follows. One of the primary rRNA binding proteins. Required for association of the 30S and 50S subunits to form the 70S ribosome, for tRNA binding and peptide bond formation. It has been suggested to have peptidyltransferase activity; this is somewhat controversial. Makes several contacts with the 16S rRNA in the 70S ribosome. In Cupriavidus pinatubonensis (strain JMP 134 / LMG 1197) (Cupriavidus necator (strain JMP 134)), this protein is Large ribosomal subunit protein uL2.